A 283-amino-acid polypeptide reads, in one-letter code: Diaminopimelate epimerase (283 aa).

Residues N13, Q45, and N65 each contribute to the substrate site. C74 functions as the Proton donor in the catalytic mechanism. Residues 75 to 76 (GN), N156, N190, and 208 to 209 (ER) contribute to the substrate site. Catalysis depends on C217, which acts as the Proton acceptor. A substrate-binding site is contributed by 218–219 (GS).

Belongs to the diaminopimelate epimerase family. In terms of assembly, homodimer.

It localises to the cytoplasm. The catalysed reaction is (2S,6S)-2,6-diaminopimelate = meso-2,6-diaminopimelate. It participates in amino-acid biosynthesis; L-lysine biosynthesis via DAP pathway; DL-2,6-diaminopimelate from LL-2,6-diaminopimelate: step 1/1. Catalyzes the stereoinversion of LL-2,6-diaminopimelate (L,L-DAP) to meso-diaminopimelate (meso-DAP), a precursor of L-lysine and an essential component of the bacterial peptidoglycan. This is Diaminopimelate epimerase from Bartonella quintana (strain Toulouse) (Rochalimaea quintana).